A 336-amino-acid chain; its full sequence is Ketol-acid reductoisomerase (NADP(+)) 1 (336 aa).

A KARI N-terminal Rossmann domain is found at 2–181 (AKVYYEKDVT…GATRAGVLET (180 aa)). NADP(+) is bound by residues 25–28 (YGSQ), Arg-48, Ser-52, and 82–85 (DELQ). The active site involves His-107. Residue Gly-133 participates in NADP(+) binding. One can recognise a KARI C-terminal knotted domain in the interval 182–327 (TFKEETETDL…RKLREMMPFV (146 aa)). Mg(2+)-binding residues include Asp-190, Glu-194, Glu-226, and Glu-230. Residue Ser-251 participates in substrate binding.

It belongs to the ketol-acid reductoisomerase family. Mg(2+) serves as cofactor.

It catalyses the reaction (2R)-2,3-dihydroxy-3-methylbutanoate + NADP(+) = (2S)-2-acetolactate + NADPH + H(+). The enzyme catalyses (2R,3R)-2,3-dihydroxy-3-methylpentanoate + NADP(+) = (S)-2-ethyl-2-hydroxy-3-oxobutanoate + NADPH + H(+). Its pathway is amino-acid biosynthesis; L-isoleucine biosynthesis; L-isoleucine from 2-oxobutanoate: step 2/4. It functions in the pathway amino-acid biosynthesis; L-valine biosynthesis; L-valine from pyruvate: step 2/4. Functionally, involved in the biosynthesis of branched-chain amino acids (BCAA). Catalyzes an alkyl-migration followed by a ketol-acid reduction of (S)-2-acetolactate (S2AL) to yield (R)-2,3-dihydroxy-isovalerate. In the isomerase reaction, S2AL is rearranged via a Mg-dependent methyl migration to produce 3-hydroxy-3-methyl-2-ketobutyrate (HMKB). In the reductase reaction, this 2-ketoacid undergoes a metal-dependent reduction by NADPH to yield (R)-2,3-dihydroxy-isovalerate. The sequence is that of Ketol-acid reductoisomerase (NADP(+)) 1 from Bacillus cereus (strain ATCC 10987 / NRS 248).